The primary structure comprises 481 residues: Arf-GAP domain and FG repeat-containing protein 2 (481 aa).

In terms of domain architecture, Arf-GAP spans 27–153; sequence EVWCRRVREL…WYVPPDQVKG (127 aa). Residues 47 to 70 form a C4-type zinc finger; the sequence is CFECAQRGVTYVDITVGSFVCTTC. 3 disordered regions span residues 150–220, 271–309, and 431–481; these read QVKG…SVKK, SSVF…APAS, and QQNG…NPFL. Polar residues predominate over residues 157–166; the sequence is TKGSASTPVQ. Lysine 173 carries the N6-acetyllysine modification. 3 stretches are compositionally biased toward polar residues: residues 188-210, 283-298, and 454-481; these read VAAS…ARST, ASFQ…SQGT, and AGIS…NPFL.

In terms of assembly, interacts with EPS15R.

The sequence is that of Arf-GAP domain and FG repeat-containing protein 2 (AGFG2) from Homo sapiens (Human).